The primary structure comprises 693 residues: Heat shock protein homolog SSE1 (693 aa).

Residue S2 is modified to N-acetylserine. A Glycyl lysine isopeptide (Lys-Gly) (interchain with G-Cter in ubiquitin) cross-link involves residue K195. Phosphothreonine is present on T242. Residues 653–693 (IRSKQEASQMAAMAEKLAAQRKAEAEKKEEKKDTEGDVDMD) form a disordered region. At S660 the chain carries Phosphoserine. Positions 673–687 (RKAEAEKKEEKKDTE) are enriched in basic and acidic residues.

This sequence belongs to the heat shock protein 70 family.

It localises to the cytoplasm. Its function is as follows. Has a calcium-dependent calmodulin-binding activity. Required for normal growth at various temperatures. The chain is Heat shock protein homolog SSE1 (SSE1) from Saccharomyces cerevisiae (strain ATCC 204508 / S288c) (Baker's yeast).